Reading from the N-terminus, the 98-residue chain is Large ribosomal subunit protein uL23 (98 aa).

Belongs to the universal ribosomal protein uL23 family. Part of the 50S ribosomal subunit. Contacts protein L29, and trigger factor when it is bound to the ribosome.

One of the early assembly proteins it binds 23S rRNA. One of the proteins that surrounds the polypeptide exit tunnel on the outside of the ribosome. Forms the main docking site for trigger factor binding to the ribosome. The protein is Large ribosomal subunit protein uL23 of Hahella chejuensis (strain KCTC 2396).